Consider the following 309-residue polypeptide: Wnt inhibitor of Dorsal protein (309 aa).

The signal sequence occupies residues 1-16 (MIFAITFFMGITSTLA). 10 disulfide bridges follow: Cys-51-Cys-62, Cys-102-Cys-110, Cys-112-Cys-121, Cys-162-Cys-179, Cys-164-Cys-174, Cys-232-Cys-269, Cys-248-Cys-262, Cys-266-Cys-308, Cys-284-Cys-299, and Cys-286-Cys-296.

Belongs to the Wnt family.

The protein localises to the secreted. It is found in the extracellular space. Its subcellular location is the extracellular matrix. Binds as a ligand to a family of frizzled seven-transmembrane receptors and acts through a cascade of genes on the nucleus. This is Wnt inhibitor of Dorsal protein (wntD) from Drosophila melanogaster (Fruit fly).